The primary structure comprises 143 residues: 3-hydroxyacyl-[acyl-carrier-protein] dehydratase FabZ (143 aa).

The active site involves histidine 49.

It belongs to the thioester dehydratase family. FabZ subfamily.

It localises to the cytoplasm. It carries out the reaction a (3R)-hydroxyacyl-[ACP] = a (2E)-enoyl-[ACP] + H2O. In terms of biological role, involved in unsaturated fatty acids biosynthesis. Catalyzes the dehydration of short chain beta-hydroxyacyl-ACPs and long chain saturated and unsaturated beta-hydroxyacyl-ACPs. This Wolbachia sp. subsp. Drosophila simulans (strain wRi) protein is 3-hydroxyacyl-[acyl-carrier-protein] dehydratase FabZ.